We begin with the raw amino-acid sequence, 410 residues long: Pyruvate dehydrogenase complex protein X component, mitochondrial (410 aa).

A mitochondrion-targeting transit peptide spans 1-30 (MLSAISKVSTLKSCTRYLTKCNYHASAKLL). The Lipoyl-binding domain maps to 32 to 108 (VKTFSMPAMS…DVGEPIAYIA (77 aa)). At Lys-73 the chain carries N6-lipoyllysine. The 42-residue stretch at 169-210 (TLLPSVSLLLAENNISKQKALKEIAPSGSNGRLLKGDVLAYL) folds into the Peripheral subunit-binding (PSBD) domain.

The protein belongs to the 2-oxoacid dehydrogenase family. Eukaryotic pyruvate dehydrogenase (PDH) complexes are organized as a core consisting of the oligomeric dihydrolipoamide acetyl-transferase (E2), around which are arranged multiple copies of pyruvate dehydrogenase (E1), dihydrolipoamide dehydrogenase (E3) and protein X (E3BP) bound by non-covalent bonds.

The protein localises to the mitochondrion matrix. Functionally, required for anchoring dihydrolipoamide dehydrogenase (E3) to the dihydrolipoamide transacetylase (E2) core of the pyruvate dehydrogenase complexes of eukaryotes. This specific binding is essential for a functional PDH complex. In Saccharomyces cerevisiae (strain ATCC 204508 / S288c) (Baker's yeast), this protein is Pyruvate dehydrogenase complex protein X component, mitochondrial (PDX1).